Consider the following 192-residue polypeptide: Thiosulfate reductase electron transfer subunit PhsB (192 aa).

3 consecutive 4Fe-4S ferredoxin-type domains span residues 8–36 (YVMLHDEKRCIGCQACTVACKVLNDVPEG), 55–86 (THFQFVRVSCQHCENAPCVSVCPTGASYRDEN), and 87–116 (GIVQVDKSRCIGCDYCVAACPFHVRYLNPQ). [4Fe-4S] cluster is bound by residues C17, C20, C23, C27, C64, C67, C72, C76, C96, C99, C102, C106, C123, C126, C139, and C143.

In terms of assembly, composed of three subunits: PhsA, PhsB and PhsC. [4Fe-4S] cluster serves as cofactor.

The protein resides in the cell inner membrane. Its function is as follows. Component of the PhsABC thiosulfate reductase that catalyzes the reduction of thiosulfate to sulfite and hydrogen sulfide, with menaquinol as the sole electron donor. Proton motive force (PMF) is required to drive transmembrane electron transfer within the reductase. The PhsB subunit transfers electrons between PhsC and PhsA. The sequence is that of Thiosulfate reductase electron transfer subunit PhsB (phsB) from Salmonella typhi.